The sequence spans 561 residues: Sesquiterpene synthase TPS2 (561 aa).

The interval 6-26 (ANGHSDVPSTQPPIGKQKKEI) is disordered. (2E,6E)-farnesyl diphosphate is bound by residues R277, D314, D318, R455, and D458. Residues D314 and D318 each coordinate Mg(2+). The short motif at 314-318 (DDTYD) is the DDXXD motif element. Residues D458, S462, and E466 each coordinate Mg(2+).

Belongs to the terpene synthase family. Tpsa subfamily. Monomer. Requires Mg(2+) as cofactor.

Its subcellular location is the cytoplasm. It catalyses the reaction (2E,6E)-farnesyl diphosphate = beta-ylangene + diphosphate. The catalysed reaction is (2E,6E)-farnesyl diphosphate = beta-copaene + diphosphate. It carries out the reaction (2E,6E)-farnesyl diphosphate = beta-cubebene + diphosphate. The protein operates within secondary metabolite biosynthesis; terpenoid biosynthesis. Functionally, sesquiterpene synthase involved in the biosynthesis of volatile organic compounds. Mediates the conversion of (2E,6E)-farnesyl diphosphate (FPP) into beta-ylangene, beta-copaene and beta-cubebene. Does not use (2E)-geranyl diphosphate (GPP) as substrate. The sequence is that of Sesquiterpene synthase TPS2 from Cananga odorata (Ylang-ylang tree).